A 364-amino-acid chain; its full sequence is Aminomethyltransferase (364 aa).

This sequence belongs to the GcvT family. As to quaternary structure, the glycine cleavage system is composed of four proteins: P, T, L and H.

The enzyme catalyses N(6)-[(R)-S(8)-aminomethyldihydrolipoyl]-L-lysyl-[protein] + (6S)-5,6,7,8-tetrahydrofolate = N(6)-[(R)-dihydrolipoyl]-L-lysyl-[protein] + (6R)-5,10-methylene-5,6,7,8-tetrahydrofolate + NH4(+). The glycine cleavage system catalyzes the degradation of glycine. In Bacillus licheniformis (strain ATCC 14580 / DSM 13 / JCM 2505 / CCUG 7422 / NBRC 12200 / NCIMB 9375 / NCTC 10341 / NRRL NRS-1264 / Gibson 46), this protein is Aminomethyltransferase.